A 497-amino-acid chain; its full sequence is Histone-lysine N-methyltransferase ASHR3 (497 aa).

Residues 118–186 (MVDCLVCHKP…QWRCVKCPMA (69 aa)) form a PHD-type zinc finger. The AWS domain maps to 283-326 (DGVGCTNCGPNCDRSCVCRVQCISCSKGCSCPESCGNRPFRKEK). The SET domain occupies 326–443 (KKIKIVKTEH…AGEPLTYDYR (118 aa)). In terms of domain architecture, Post-SET spans 449–465 (PEVKCNCGSENCQGYLG).

This sequence belongs to the class V-like SAM-binding methyltransferase superfamily. Histone-lysine methyltransferase family. SET2 subfamily. Interacts with AMS/bHLH21 by its SET domain and PHD finger. As to expression, expressed in roots, flowers and buds, the anther and in stamen filaments.

The protein resides in the nucleus. It localises to the chromosome. It carries out the reaction L-lysyl-[histone] + S-adenosyl-L-methionine = N(6)-methyl-L-lysyl-[histone] + S-adenosyl-L-homocysteine + H(+). Its function is as follows. Histone methyltransferase. Involved in stamen development. This is Histone-lysine N-methyltransferase ASHR3 (ASHR3) from Arabidopsis thaliana (Mouse-ear cress).